A 529-amino-acid chain; its full sequence is Peptide chain release factor 3 (529 aa).

One can recognise a tr-type G domain in the interval 11–280; sequence AKRRTFAIIS…GLVEWAPAPM (270 aa). GTP contacts are provided by residues 20–27, 88–92, and 142–145; these read SHPDAGKT, DTPGH, and NKLD.

It belongs to the TRAFAC class translation factor GTPase superfamily. Classic translation factor GTPase family. PrfC subfamily.

The protein resides in the cytoplasm. Increases the formation of ribosomal termination complexes and stimulates activities of RF-1 and RF-2. It binds guanine nucleotides and has strong preference for UGA stop codons. It may interact directly with the ribosome. The stimulation of RF-1 and RF-2 is significantly reduced by GTP and GDP, but not by GMP. This is Peptide chain release factor 3 from Citrobacter koseri (strain ATCC BAA-895 / CDC 4225-83 / SGSC4696).